The following is a 301-amino-acid chain: Cardiolipin synthase (CMP-forming) (301 aa).

Residues S70–Q93 are disordered. Low complexity predominate over residues G71 to Q93. The next 5 helical transmembrane spans lie at I109 to I129, F133 to I153, I190 to V212, L250 to L270, and I272 to G292.

The protein belongs to the CDP-alcohol phosphatidyltransferase class-I family. A divalent metal cation serves as cofactor. Highly expressed in tissues such as heart, skeletal muscle and liver.

It is found in the mitochondrion inner membrane. The enzyme catalyses a CDP-1,2-diacyl-sn-glycerol + a 1,2-diacyl-sn-glycero-3-phospho-(1'-sn-glycerol) = a cardiolipin + CMP + H(+). Functionally, catalyzes the synthesis of cardiolipin (CL) (diphosphatidylglycerol) by specifically transferring a phosphatidyl group from CDP-diacylglycerol to phosphatidylglycerol (PG). CL is a key phospholipid in mitochondrial membranes and plays important roles in maintaining the functional integrity and dynamics of mitochondria under both optimal and stress conditions. This Homo sapiens (Human) protein is Cardiolipin synthase (CMP-forming) (CRLS1).